Consider the following 99-residue polypeptide: Large ribosomal subunit protein bL27 (99 aa).

Residues Met1 to Phe9 constitute a propeptide that is removed on maturation.

This sequence belongs to the bacterial ribosomal protein bL27 family. The N-terminus is cleaved by ribosomal processing cysteine protease Prp.

In Clostridium novyi (strain NT), this protein is Large ribosomal subunit protein bL27.